The primary structure comprises 730 residues: Double-strand break repair protein MRE11 (730 aa).

D17, H19, D57, and N124 together coordinate Mn(2+). H125 acts as the Proton donor in catalysis. The Mn(2+) site is built by H213, H241, and H243. The segment at 521 to 730 (LSGQQKQAQR…SMPARKSKRY (210 aa)) is disordered. Acidic residues predominate over residues 581 to 591 (GDEDNLFEEEE). The span at 595–633 (KTTAKRAPTTRATRKTAAATRATTATKASAPAKKSIAAP) shows a compositional bias: low complexity. Positions 645-659 (SAEEEEDVIMDDDDD) are enriched in acidic residues. A compositionally biased stretch (pro residues) spans 662 to 672 (PAPPVKAPPPK). A compositionally biased stretch (polar residues) spans 685-704 (TRQTTLNFSQAERPTRTTQK). Residues 708-719 (ISDDEISEDDAF) show a composition bias toward acidic residues.

Belongs to the MRE11/RAD32 family. As to quaternary structure, component of the MRN complex composed of two heterodimers RAD50 and MRE11 associated with a single NBS1. The cofactor is Mn(2+).

The protein localises to the nucleus. The protein resides in the chromosome. It localises to the telomere. Functionally, core component of the MRN complex, which plays a central role in double-strand break (DSB) repair, DNA recombination, maintenance of telomere integrity and meiosis. The MRN complex is involved in the repair of DNA double-strand breaks (DSBs) via homologous recombination (HR), an error-free mechanism which primarily occurs during S and G2 phases. The complex (1) mediates the end resection of damaged DNA, which generates proper single-stranded DNA, a key initial steps in HR, and is (2) required for the recruitment of other repair factors and efficient activation of ATM and ATR upon DNA damage. Within the MRN complex, MRE11 possesses both single-strand endonuclease activity and double-strand-specific 3'-5' exonuclease activity. MRE11 first endonucleolytically cleaves the 5' strand at DNA DSB ends to prevent non-homologous end joining (NHEJ) and licence HR. It then generates a single-stranded DNA gap via 3' to 5' exonucleolytic degradation, which is required for single-strand invasion and recombination. The chain is Double-strand break repair protein MRE11 from Chaetomium thermophilum (strain DSM 1495 / CBS 144.50 / IMI 039719) (Thermochaetoides thermophila).